A 275-amino-acid chain; its full sequence is Serine/threonine-protein phosphatase PGAM5, mitochondrial (275 aa).

Residues 7 to 24 traverse the membrane as a helical segment; sequence LIAGGSAAAAILGVVAAG.

This sequence belongs to the phosphoglycerate mutase family. BPG-dependent PGAM subfamily. Post-translationally, phosphorylated by the RIPK1/RIPK3 complex under necrotic conditions. This phosphorylation increases PGAM5 phosphatase activity.

It localises to the mitochondrion outer membrane. It catalyses the reaction O-phospho-L-seryl-[protein] + H2O = L-seryl-[protein] + phosphate. The enzyme catalyses O-phospho-L-threonyl-[protein] + H2O = L-threonyl-[protein] + phosphate. Functionally, displays phosphatase activity for serine/threonine residues. Has apparently no phosphoglycerate mutase activity. May be regulator of mitochondrial dynamics. May be a central mediator for programmed necrosis. The chain is Serine/threonine-protein phosphatase PGAM5, mitochondrial (pgam5) from Xenopus laevis (African clawed frog).